The sequence spans 339 residues: uncharacterized protein (339 aa).

NADP(+) contacts are provided by Ile-54, Lys-78, Asp-101, Asn-128, Tyr-213, and Lys-217. Tyr-213 (proton donor) is an active-site residue. Residue Lys-217 is the Lowers pKa of active site Tyr of the active site.

This sequence belongs to the short-chain dehydrogenases/reductases (SDR) family.

This is an uncharacterized protein from Schizosaccharomyces pombe (strain 972 / ATCC 24843) (Fission yeast).